The chain runs to 110 residues: Ribonuclease P protein component 4 (110 aa).

Zn(2+)-binding residues include cysteine 65, cysteine 68, cysteine 94, and cysteine 97.

This sequence belongs to the eukaryotic/archaeal RNase P protein component 4 family. Consists of a catalytic RNA component and at least 4-5 protein subunits. Requires Zn(2+) as cofactor.

The protein resides in the cytoplasm. The catalysed reaction is Endonucleolytic cleavage of RNA, removing 5'-extranucleotides from tRNA precursor.. Its function is as follows. Part of ribonuclease P, a protein complex that generates mature tRNA molecules by cleaving their 5'-ends. This chain is Ribonuclease P protein component 4, found in Methanococcus maripaludis (strain C7 / ATCC BAA-1331).